The primary structure comprises 356 residues: 3-isopropylmalate dehydrogenase (356 aa).

Substrate is bound by residues R95, R105, R133, and D223. The Mg(2+) site is built by D223, D247, and D251. Residue 281–293 participates in NAD(+) binding; that stretch reads GSAPDIAGQNKAN.

It belongs to the isocitrate and isopropylmalate dehydrogenases family. LeuB type 1 subfamily. In terms of assembly, homodimer. Mg(2+) is required as a cofactor. The cofactor is Mn(2+).

It localises to the cytoplasm. The enzyme catalyses (2R,3S)-3-isopropylmalate + NAD(+) = 4-methyl-2-oxopentanoate + CO2 + NADH. The protein operates within amino-acid biosynthesis; L-leucine biosynthesis; L-leucine from 3-methyl-2-oxobutanoate: step 3/4. Catalyzes the oxidation of 3-carboxy-2-hydroxy-4-methylpentanoate (3-isopropylmalate) to 3-carboxy-4-methyl-2-oxopentanoate. The product decarboxylates to 4-methyl-2 oxopentanoate. This Neisseria meningitidis serogroup B (strain ATCC BAA-335 / MC58) protein is 3-isopropylmalate dehydrogenase.